The sequence spans 317 residues: MTDKLTSLRQITTVVADTGDIAAMKLYQPQDATTNPSIILNAAQIPEYRKLIDEAIAWAREQSSDHAQQIVDATDKLAVNIGLEILKLIPGRISTEVDARLSYDTVASVAKAKRLIKLYNEAGISNDRILIKLASTWQGIRAAEQLEKEGINCNLTLLFSFAQARACAEAGVFLISPFVGRILDWYKANGDQKEFAPSEDPGVVSVTEIYQYYKKHGYKTVVMGASFRNLGEIIELAGCDRLTIAPSLLKELAESEGPVERKLAYTGEIQAKPAPLTEAEFYWQHNQDPMAVDKLADGIRKFAIDQGKLEKMISDLL.

Residue lysine 132 is the Schiff-base intermediate with substrate of the active site.

It belongs to the transaldolase family. Type 1 subfamily. As to quaternary structure, homodimer.

It localises to the cytoplasm. The catalysed reaction is D-sedoheptulose 7-phosphate + D-glyceraldehyde 3-phosphate = D-erythrose 4-phosphate + beta-D-fructose 6-phosphate. It functions in the pathway carbohydrate degradation; pentose phosphate pathway; D-glyceraldehyde 3-phosphate and beta-D-fructose 6-phosphate from D-ribose 5-phosphate and D-xylulose 5-phosphate (non-oxidative stage): step 2/3. Functionally, transaldolase is important for the balance of metabolites in the pentose-phosphate pathway. The sequence is that of Transaldolase from Yersinia pseudotuberculosis serotype O:1b (strain IP 31758).